The chain runs to 167 residues: MTTAFYPGSFDPMTNGHLDVLVQALNVASKVIVAIGIHPGKKPLFSFEERAELINRSLADALPKKAADISVVSFDNLVVDAARKHGASLLVRGLRDGTDLDYEMQMAGMNRQMAPDIQTLFLPAGTASRPITATLVRQIASMGGNVSAFVPPAVLEALTGKLKDPAK.

S9 serves as a coordination point for substrate. ATP contacts are provided by residues 9–10 (SF) and H17. 3 residues coordinate substrate: K41, V78, and R92. Residues 93–95 (GLR), E103, and 128–134 (SRPITAT) each bind ATP.

Belongs to the bacterial CoaD family. Homohexamer. Requires Mg(2+) as cofactor.

Its subcellular location is the cytoplasm. The catalysed reaction is (R)-4'-phosphopantetheine + ATP + H(+) = 3'-dephospho-CoA + diphosphate. The protein operates within cofactor biosynthesis; coenzyme A biosynthesis; CoA from (R)-pantothenate: step 4/5. Reversibly transfers an adenylyl group from ATP to 4'-phosphopantetheine, yielding dephospho-CoA (dPCoA) and pyrophosphate. The polypeptide is Phosphopantetheine adenylyltransferase (Rhizobium rhizogenes (strain K84 / ATCC BAA-868) (Agrobacterium radiobacter)).